The following is a 569-amino-acid chain: Proline--tRNA ligase (569 aa).

Belongs to the class-II aminoacyl-tRNA synthetase family. ProS type 1 subfamily. Homodimer.

The protein resides in the cytoplasm. The enzyme catalyses tRNA(Pro) + L-proline + ATP = L-prolyl-tRNA(Pro) + AMP + diphosphate. Its function is as follows. Catalyzes the attachment of proline to tRNA(Pro) in a two-step reaction: proline is first activated by ATP to form Pro-AMP and then transferred to the acceptor end of tRNA(Pro). As ProRS can inadvertently accommodate and process non-cognate amino acids such as alanine and cysteine, to avoid such errors it has two additional distinct editing activities against alanine. One activity is designated as 'pretransfer' editing and involves the tRNA(Pro)-independent hydrolysis of activated Ala-AMP. The other activity is designated 'posttransfer' editing and involves deacylation of mischarged Ala-tRNA(Pro). The misacylated Cys-tRNA(Pro) is not edited by ProRS. The protein is Proline--tRNA ligase of Lactiplantibacillus plantarum (strain ATCC BAA-793 / NCIMB 8826 / WCFS1) (Lactobacillus plantarum).